A 602-amino-acid chain; its full sequence is Elongation factor 4 (602 aa).

One can recognise a tr-type G domain in the interval 7 to 189; that stretch reads KYIRNFSIVA…AIVSKVPAPY (183 aa). GTP contacts are provided by residues 19 to 24 and 136 to 139; these read DHGKST and NKID.

This sequence belongs to the TRAFAC class translation factor GTPase superfamily. Classic translation factor GTPase family. LepA subfamily.

It localises to the cell membrane. It carries out the reaction GTP + H2O = GDP + phosphate + H(+). Required for accurate and efficient protein synthesis under certain stress conditions. May act as a fidelity factor of the translation reaction, by catalyzing a one-codon backward translocation of tRNAs on improperly translocated ribosomes. Back-translocation proceeds from a post-translocation (POST) complex to a pre-translocation (PRE) complex, thus giving elongation factor G a second chance to translocate the tRNAs correctly. Binds to ribosomes in a GTP-dependent manner. This chain is Elongation factor 4, found in Clostridium botulinum (strain Loch Maree / Type A3).